A 317-amino-acid polypeptide reads, in one-letter code: MGQTPEDWGEKPPVALIAGPTASGKSDVAVRLALALKKHGRDAVVINADSAQVYADLRVLSARPSEDEMRGVPHELFGEWDGAEACSAAEWASRAKEEISKAHFTGAVPILVGGTGLYLRTLLEGIAPIPPIDAAIREAIRALPQDEARAALEREDPDASKRLAPADAARTARALEVVRSTGRTLSNWQQHKKGGIGDRVALHPLIMLPDRKWLYARCDRRFELMLDRGAASEVETLLARDLDPSLPVMRAIGVREIAAWLKGEIDRPQMIASGQQATRNYAKRQYTWFRHQPPPDWPRIETFDFKLERVFDGLFQY.

Residue 19-26 coordinates ATP; it reads GPTASGKS. A substrate-binding site is contributed by 21-26; sequence TASGKS. The tract at residues 49–52 is interaction with substrate tRNA; the sequence is DSAQ.

The protein belongs to the IPP transferase family. In terms of assembly, monomer. Requires Mg(2+) as cofactor.

It catalyses the reaction adenosine(37) in tRNA + dimethylallyl diphosphate = N(6)-dimethylallyladenosine(37) in tRNA + diphosphate. In terms of biological role, catalyzes the transfer of a dimethylallyl group onto the adenine at position 37 in tRNAs that read codons beginning with uridine, leading to the formation of N6-(dimethylallyl)adenosine (i(6)A). The sequence is that of tRNA dimethylallyltransferase from Erythrobacter litoralis (strain HTCC2594).